We begin with the raw amino-acid sequence, 262 residues long: Protein Pcal_0062 (262 aa).

The protein belongs to the CinA family.

The protein is Protein Pcal_0062 of Pyrobaculum calidifontis (strain DSM 21063 / JCM 11548 / VA1).